Reading from the N-terminus, the 496-residue chain is Fizzy-related protein homolog (496 aa).

Disordered stretches follow at residues arginine 28 to serine 51, isoleucine 64 to glycine 88, and glutamate 105 to lysine 166. Threonine 32 carries the phosphothreonine modification. Residues threonine 32 to serine 42 are compositionally biased toward polar residues. At serine 36 the chain carries Phosphoserine. The tract at residues arginine 47–arginine 52 is involved in APC/FZR1 E3 ubiquitin-protein ligase complex activity. Residue lysine 69 is modified to N6-acetyllysine. Basic and acidic residues-rich tracts occupy residues lysine 76–lysine 86 and lysine 106–glycine 126. Phosphoserine is present on residues serine 133, serine 138, serine 146, and serine 151. The segment covering serine 146–leucine 160 has biased composition (polar residues). Lysine 159 is modified (N6-acetyllysine). WD repeat units follow at residues proline 182–leucine 222, valine 227–methionine 266, glycine 269–glutamate 306, glycine 311–glutamine 350, glutamate 353–cysteine 395, aspartate 397–lysine 438, and glycine 441–lysine 480.

This sequence belongs to the WD repeat CDC20/Fizzy family. In terms of assembly, the unphosphorylated form interacts with APC/C during mitosis. Interacts with NINL. Interacts (in complex with the anaphase promoting complex APC) with MAD2L2; inhibits FZR1-mediated APC/C activation. Interacts with SIRT2 and USP37. Interacts (via WD repeats) with MAK. Interacts with RBBP8/CtIP; this interaction leads to RBBP8 proteasomal degradation. Interacts with HECW2. Interacts with SASS6; the interaction is regulated by CENATAC and leads to SASS6 proteasomal degradation. Interacts (via N-terminus) with CCNF. Interacts with CDC6. Interacts with TK1 (via the KEN box). In terms of processing, acetylated. Deacetylated by SIRT2 at Lys-69 and Lys-159; deacetylation enhances the interaction of FZR1 with CDC27, leading to activation of anaphase promoting complex/cyclosome (APC/C). Following DNA damage, it is dephosphorylated by CDC14B in G2 phase, leading to its reassociation with the APC/C, and allowing an efficient G2 DNA damage checkpoint. Phosphorylated by MAK. Post-translationally, ubiquitinated by the SCF(CCNF) E3 ubiquitin-protein ligase complex; leading to its degradation by the proteasome. As to expression, isoform 2 is expressed at high levels in heart, liver, spleen and some cancer cell lines whereas isoform 3 is expressed only at low levels in these tissues.

Its subcellular location is the nucleus. It localises to the cytoplasm. Its pathway is protein modification; protein ubiquitination. In terms of biological role, substrate-specific adapter for the anaphase promoting complex/cyclosome (APC/C) E3 ubiquitin-protein ligase complex. Associates with the APC/C in late mitosis, in replacement of CDC20, and activates the APC/C during anaphase and telophase. The APC/C remains active in degrading substrates to ensure that positive regulators of the cell cycle do not accumulate prematurely. At the G1/S transition FZR1 is phosphorylated, leading to its dissociation from the APC/C. Following DNA damage, it is required for the G2 DNA damage checkpoint: its dephosphorylation and reassociation with the APC/C leads to the ubiquitination of PLK1, preventing entry into mitosis. Acts as an adapter for APC/C to target the DNA-end resection factor RBBP8/CtIP for ubiquitination and subsequent proteasomal degradation. Through the regulation of RBBP8/CtIP protein turnover, may play a role in DNA damage response, favoring DNA double-strand repair through error-prone non-homologous end joining (NHEJ) over error-free, RBBP8-mediated homologous recombination (HR). This chain is Fizzy-related protein homolog, found in Homo sapiens (Human).